The sequence spans 446 residues: Ribosomal protein uS12 methylthiotransferase RimO (446 aa).

The MTTase N-terminal domain maps to 10 to 122 (KTLHMVSLGC…IDELVNEKRS (113 aa)). [4Fe-4S] cluster is bound by residues Cys19, Cys53, Cys85, Cys154, Cys158, and Cys161. The Radical SAM core domain occupies 140–369 (TGSSYHAYVK…GEIISQTTQE (230 aa)). In terms of domain architecture, TRAM spans 372–446 (ESEVGKTFEV…GDKLLATVIK (75 aa)).

The protein belongs to the methylthiotransferase family. RimO subfamily. The cofactor is [4Fe-4S] cluster.

The protein resides in the cytoplasm. It carries out the reaction L-aspartate(89)-[ribosomal protein uS12]-hydrogen + (sulfur carrier)-SH + AH2 + 2 S-adenosyl-L-methionine = 3-methylsulfanyl-L-aspartate(89)-[ribosomal protein uS12]-hydrogen + (sulfur carrier)-H + 5'-deoxyadenosine + L-methionine + A + S-adenosyl-L-homocysteine + 2 H(+). In terms of biological role, catalyzes the methylthiolation of an aspartic acid residue of ribosomal protein uS12. The chain is Ribosomal protein uS12 methylthiotransferase RimO from Aliarcobacter butzleri (strain RM4018) (Arcobacter butzleri).